A 97-amino-acid polypeptide reads, in one-letter code: Small ribosomal subunit protein bS18c (97 aa).

This sequence belongs to the bacterial ribosomal protein bS18 family. As to quaternary structure, part of the 30S ribosomal subunit.

It localises to the plastid. Its subcellular location is the chloroplast. This chain is Small ribosomal subunit protein bS18c, found in Oenothera glazioviana (Large-flowered evening primrose).